The chain runs to 96 residues: Growth-regulated alpha protein (96 aa).

A signal peptide spans 1–24 (MIPATRSLLCAALLLLATSRLATG). Intrachain disulfides connect Cys33–Cys59 and Cys35–Cys75.

The protein belongs to the intercrine alpha (chemokine CxC) family. The N-terminal processed form KC(5-72) is produced by proteolytic cleavage after secretion from bone marrow stromal cells.

Its subcellular location is the secreted. Has chemotactic activity for neutrophils. Contributes to neutrophil activation during inflammation. Hematoregulatory chemokine, which, in vitro, suppresses hematopoietic progenitor cell proliferation. KC(5-72) shows a highly enhanced hematopoietic activity. The sequence is that of Growth-regulated alpha protein (Cxcl1) from Mus musculus (Mouse).